A 125-amino-acid chain; its full sequence is Large ribosomal subunit protein bL12 (125 aa).

This sequence belongs to the bacterial ribosomal protein bL12 family. Homodimer. Part of the ribosomal stalk of the 50S ribosomal subunit. Forms a multimeric L10(L12)X complex, where L10 forms an elongated spine to which 2 to 4 L12 dimers bind in a sequential fashion. Binds GTP-bound translation factors.

Forms part of the ribosomal stalk which helps the ribosome interact with GTP-bound translation factors. Is thus essential for accurate translation. This is Large ribosomal subunit protein bL12 from Thioalkalivibrio sulfidiphilus (strain HL-EbGR7).